Here is a 189-residue protein sequence, read N- to C-terminus: Probable nicotinate-nucleotide adenylyltransferase (189 aa).

Belongs to the NadD family.

The catalysed reaction is nicotinate beta-D-ribonucleotide + ATP + H(+) = deamido-NAD(+) + diphosphate. Its pathway is cofactor biosynthesis; NAD(+) biosynthesis; deamido-NAD(+) from nicotinate D-ribonucleotide: step 1/1. In terms of biological role, catalyzes the reversible adenylation of nicotinate mononucleotide (NaMN) to nicotinic acid adenine dinucleotide (NaAD). The protein is Probable nicotinate-nucleotide adenylyltransferase of Bacillus mycoides (strain KBAB4) (Bacillus weihenstephanensis).